Here is a 264-residue protein sequence, read N- to C-terminus: Small ribosomal subunit protein uS2 (264 aa).

The tract at residues 222 to 246 is disordered; the sequence is GRSENKDEQNEQGEQIAPVTNEEKQ.

This sequence belongs to the universal ribosomal protein uS2 family.

This chain is Small ribosomal subunit protein uS2, found in Helicobacter hepaticus (strain ATCC 51449 / 3B1).